We begin with the raw amino-acid sequence, 474 residues long: tRNA-2-methylthio-N(6)-dimethylallyladenosine synthase (474 aa).

Positions 3–120 (KKLLIKTWGC…LPEMIKQSQT (118 aa)) constitute an MTTase N-terminal domain. Residues cysteine 12, cysteine 49, cysteine 83, cysteine 157, cysteine 161, and cysteine 164 each contribute to the [4Fe-4S] cluster site. One can recognise a Radical SAM core domain in the interval 143–375 (RAEGATAFVS…QQTINAQAMR (233 aa)). The 64-residue stretch at 378–441 (RLMLATEQRV…ANSLRGELVR (64 aa)) folds into the TRAM domain.

Belongs to the methylthiotransferase family. MiaB subfamily. As to quaternary structure, monomer. [4Fe-4S] cluster is required as a cofactor.

The protein localises to the cytoplasm. The enzyme catalyses N(6)-dimethylallyladenosine(37) in tRNA + (sulfur carrier)-SH + AH2 + 2 S-adenosyl-L-methionine = 2-methylsulfanyl-N(6)-dimethylallyladenosine(37) in tRNA + (sulfur carrier)-H + 5'-deoxyadenosine + L-methionine + A + S-adenosyl-L-homocysteine + 2 H(+). Functionally, catalyzes the methylthiolation of N6-(dimethylallyl)adenosine (i(6)A), leading to the formation of 2-methylthio-N6-(dimethylallyl)adenosine (ms(2)i(6)A) at position 37 in tRNAs that read codons beginning with uridine. The protein is tRNA-2-methylthio-N(6)-dimethylallyladenosine synthase of Vibrio parahaemolyticus serotype O3:K6 (strain RIMD 2210633).